The sequence spans 485 residues: UDP-glycosyltransferase 91D1 (485 aa).

UDP-alpha-D-glucose is bound by residues S296, 355 to 356, 373 to 381, and 395 to 398; these read WA, HCGSGSIVE, and FCDQ.

This sequence belongs to the UDP-glycosyltransferase family.

May glycosylate diterpenes or flavonols in leaves. The sequence is that of UDP-glycosyltransferase 91D1 from Stevia rebaudiana (Stevia).